The following is a 259-amino-acid chain: Protein FAM220A (259 aa).

The segment at 29-66 is disordered; sequence GLKRRSEKRNPSPSDVPSWTDQPVADTHGKSRAMAAAS. Residues 39–49 show a composition bias toward polar residues; that stretch reads PSPSDVPSWTD.

Interacts with transcriptional activator STAT3; the interaction occurs in both the nucleus and the cytoplasm, is enhanced by IL6 and promotes STAT3 dephosphorylation, leading to negative regulation of STAT3 transcriptional activator activity. Can interact with both unphosphorylated and phosphorylated STAT3 but interacts preferentially with phosphorylated STAT3 in the nucleus. Interacts with protein phosphatase PTPN2/TC45; this promotes interaction of PTPN2 with STAT3, leading to dephosphorylation of STAT3 by PTPN2.

It is found in the nucleus. The protein localises to the cytoplasm. Its subcellular location is the cytoplasmic vesicle. It localises to the secretory vesicle. The protein resides in the acrosome. In terms of biological role, promotes dephosphorylation of transcriptional activator STAT3 by interacting with both STAT3 and protein phosphatase PTPN2. This promotes interaction of PTPN2 with STAT3 and mediates STAT3 dephosphorylation by PTPN2, leading to negative regulation of STAT3 transcriptional activator activity. May be required for spermiogenesis or sperm function. In Rattus norvegicus (Rat), this protein is Protein FAM220A (Fam220a).